The chain runs to 25 residues: GVVDILKGAAKDLAGHLATKVMNKL.

Position 25 is a leucine amide (leucine 25).

It belongs to the frog skin active peptide (FSAP) family. Ocellatin subfamily. In terms of tissue distribution, expressed by the skin glands.

It localises to the secreted. Its function is as follows. Antimicrobial peptide with activity against Gram-negative bacteria but without activity against Gram-positive bacteria. Shows a low activity in stimulating insulin release from rat BRIN-BD11 beta cells, and acts without loss of integrity of the plasma membrane. Has very low hemolytic activity. Shows weak amphipathicity in its alpha-helical conformation. The sequence is that of Ocellatin-L1 from Leptodactylus laticeps (Santa Fe frog).